The chain runs to 427 residues: 3-phosphoshikimate 1-carboxyvinyltransferase (427 aa).

The 3-phosphoshikimate site is built by Lys-22, Ser-23, and Arg-27. Residue Lys-22 coordinates phosphoenolpyruvate. Positions 96 and 124 each coordinate phosphoenolpyruvate. 3-phosphoshikimate-binding residues include Ser-169, Ser-170, Gln-171, Ser-197, Asp-313, Asn-336, and Lys-340. Residue Gln-171 coordinates phosphoenolpyruvate. Catalysis depends on Asp-313, which acts as the Proton acceptor. Phosphoenolpyruvate is bound by residues Arg-344, Arg-386, and Lys-411.

The protein belongs to the EPSP synthase family. In terms of assembly, monomer.

It is found in the cytoplasm. The enzyme catalyses 3-phosphoshikimate + phosphoenolpyruvate = 5-O-(1-carboxyvinyl)-3-phosphoshikimate + phosphate. The protein operates within metabolic intermediate biosynthesis; chorismate biosynthesis; chorismate from D-erythrose 4-phosphate and phosphoenolpyruvate: step 6/7. Its function is as follows. Catalyzes the transfer of the enolpyruvyl moiety of phosphoenolpyruvate (PEP) to the 5-hydroxyl of shikimate-3-phosphate (S3P) to produce enolpyruvyl shikimate-3-phosphate and inorganic phosphate. The polypeptide is 3-phosphoshikimate 1-carboxyvinyltransferase (Salmonella arizonae (strain ATCC BAA-731 / CDC346-86 / RSK2980)).